The sequence spans 185 residues: CD160 antigen (185 aa).

Positions 1-27 (MQRILMAPGQSCCALAILLAIVNFQHG) are cleaved as a signal peptide. The 109-residue stretch at 28-136 (GCIHVTSSAS…HGHFLSVLVT (109 aa)) folds into the Ig-like V-type domain. 2 disulfide bridges follow: Cys47–Cys115 and Cys64–Cys71. N-linked (GlcNAc...) asparagine glycosylation is found at Asn138 and Asn156. A lipid anchor (GPI-anchor amidated serine) is attached at Ser160. Positions 161–185 (SGFLQVKAWGMLVTSLVALQALYTL) are cleaved as a propeptide — removed in mature form.

As to quaternary structure, homomultimer; disulfide-linked. Interacts with classical and non-classical MHC class I molecules. Interacts with TNFRSF14 (via cysteine-rich domain 1); this interaction is direct. Interacts with LCK and CD247/CD3 zeta chain. In terms of tissue distribution, expressed in resting and activated NK cell subsets (at protein level). Expressed in resting NKT cells (at protein level). Expressed in activated CD8+ T cells (at protein level). Highly expressed in intraepithelial lymphocyte (IEL) subsets, particularly in innate-like CD8A-positive IELs (at protein level).

It is found in the cell membrane. It localises to the secreted. In terms of biological role, receptor on immune cells capable to deliver stimulatory or inhibitory signals that regulate cell activation and differentiation. Exists as a GPI-anchored and as a transmembrane form, each likely initiating distinct signaling pathways via phosphoinositol 3-kinase in activated NK cells and via LCK and CD247/CD3 zeta chain in activated T cells. Receptor for both classical and non-classical MHC class I molecules. Receptor or ligand for TNF superfamily member TNFRSF14, participating in bidirectional cell-cell contact signaling between antigen presenting cells and lymphocytes. Upon ligation of TNFRSF14, provides stimulatory signal to NK cells enhancing IFNG production and anti-tumor immune response. On activated CD4+ T cells, interacts with TNFRSF14 and down-regulates CD28 costimulatory signaling, restricting memory and alloantigen-specific immune response. In the context of bacterial infection, acts as a ligand for TNFRSF14 on epithelial cells, triggering the production of antimicrobial proteins and pro-inflammatory cytokines. Functionally, the soluble GPI-cleaved form, usually released by activated lymphocytes, might play an immune regulatory role by limiting lymphocyte effector functions. The sequence is that of CD160 antigen from Mus musculus (Mouse).